Here is a 247-residue protein sequence, read N- to C-terminus: ATP synthase subunit a, chloroplastic (247 aa).

Helical transmembrane passes span 38–58, 95–115, 134–154, 199–219, and 220–240; these read QVLI…ILVV, VPFI…GALL, INTT…AGIS, LVVV…VMFL, and GLFT…AYIG.

This sequence belongs to the ATPase A chain family. F-type ATPases have 2 components, CF(1) - the catalytic core - and CF(0) - the membrane proton channel. CF(1) has five subunits: alpha(3), beta(3), gamma(1), delta(1), epsilon(1). CF(0) has four main subunits: a, b, b' and c.

Its subcellular location is the plastid. The protein localises to the chloroplast thylakoid membrane. Its function is as follows. Key component of the proton channel; it plays a direct role in the translocation of protons across the membrane. The protein is ATP synthase subunit a, chloroplastic of Pisum sativum (Garden pea).